A 77-amino-acid polypeptide reads, in one-letter code: MADTLSRITKIVVDRLGVDEAEVKPEASFKDDLGADSLDVVELVMELEDEFDLEISDEEAEKIATVADVVEYIEGRQ.

The 76-residue stretch at 2–77 folds into the Carrier domain; sequence ADTLSRITKI…DVVEYIEGRQ (76 aa). Position 37 is an O-(pantetheine 4'-phosphoryl)serine (serine 37).

This sequence belongs to the acyl carrier protein (ACP) family. 4'-phosphopantetheine is transferred from CoA to a specific serine of apo-ACP by AcpS. This modification is essential for activity because fatty acids are bound in thioester linkage to the sulfhydryl of the prosthetic group.

It is found in the cytoplasm. Its pathway is lipid metabolism; fatty acid biosynthesis. Its function is as follows. Carrier of the growing fatty acid chain in fatty acid biosynthesis. The sequence is that of Acyl carrier protein from Halalkalibacterium halodurans (strain ATCC BAA-125 / DSM 18197 / FERM 7344 / JCM 9153 / C-125) (Bacillus halodurans).